The sequence spans 246 residues: Transcription factor MYB13 (246 aa).

2 HTH myb-type domains span residues 9–61 (KIGL…INYL) and 62–116 (RPDI…KKRL). 2 consecutive DNA-binding regions (H-T-H motif) follow at residues 37–61 (WRAL…INYL) and 89–112 (WSAI…HTHL).

Expressed in roots and flowers. Expressed in shoot apex, axillary buds, at the basis of flowers and branching points of inflorescences.

The protein localises to the nucleus. In terms of biological role, plays a regulatory role in meristem function. Functions as component of a regulatory network controlling the establishment and/or development of the shoot system by the regulation of apical meristem function. May play a role in tolerance to boric acid. This Arabidopsis thaliana (Mouse-ear cress) protein is Transcription factor MYB13.